The sequence spans 747 residues: Pyrin (747 aa).

The 92-residue stretch at 1 to 92 folds into the Pyrin domain; the sequence is MANTRVDHLL…AEELHKATGP (92 aa). The disordered stretch occupies residues 89-181; sequence ATGPEHLTEE…GARSAAPLYR (93 aa). Over residues 122-135 the composition is skewed to acidic residues; it reads PGEDEAQQNDDESD. C442, H445, C465, and H471 together coordinate Zn(2+). A B box-type zinc finger spans residues 442 to 479; that stretch reads CPRHMKQVQLLFCEDHREPICLICRLSQEHQGHRVRPI. Positions 479 to 508 form a coiled coil; the sequence is IEEAALQYKEQIRKQLERLREMRGYVEEHK. The segment at 487–645 is required for homotrimerization and induction of pyroptosomes; sequence KEQIRKQLER…RFSEMLGSEM (159 aa). Positions 698–720 are disordered; the sequence is EPQDYLHPSSAQDTPELHEIHSQ.

In terms of assembly, homotrimer. Interacts (via the B box-type zinc finger) with PSTPIP1. Interacts (via the B30.2/SPRY domain) with several components of the inflammasome complex, including CASP1 p20 and p10 subunits, CASP5, PYCARD, NLRP1, NLRP2 and NLRP3, as well as with unprocessed IL1B; this interaction may lead to autophagic degradation of these proteins. Component of the AIM2 PANoptosome complex, a multiprotein complex that drives inflammatory cell death (PANoptosis). Interacts with NFKBIA and RELA. Interacts weakly with VASP and ACTR3. Interacts with active ULK1 (phosphorylated on 'Ser-317') and BECN1 simultaneously. Also interacts with ATG16L1 (via WD repeats), and with ATG8 family members, including GABARAP, GABARAPL1 and, to a lesser extent, GABARAPL2, MAP1LC3A/LC3A and MAP1LC3C/LC3C. Interacts with TRIM21. Interacts with YWHAB, YWHAE, YWHAG, YWHAH, YWHAQ and YWHAZ; the interaction is required for the down-regulation of pyrin pro-inflammatory activity. Degraded along with the delivery of its substrates to autolysosomal compartments (at protein level). In terms of tissue distribution, expressed in spleen and, to a lesser degree in the lung. Not expressed in thymus, testis, ovary, heart, brain, liver, kidney and muscle.

It is found in the cytoplasm. The protein resides in the cytoskeleton. The protein localises to the cell projection. It localises to the ruffle. Its subcellular location is the lamellipodium. It is found in the cytoplasmic vesicle. The protein resides in the autophagosome. The protein localises to the nucleus. In terms of biological role, involved in the regulation of innate immunity and the inflammatory response in response to IFNG/IFN-gamma. Organizes autophagic machinery by serving as a platform for the assembly of ULK1, Beclin 1/BECN1, ATG16L1, and ATG8 family members and recognizes specific autophagy targets, thus coordinating target recognition with assembly of the autophagic apparatus and initiation of autophagy. Acts as an autophagy receptor for the degradation of several inflammasome components, including CASP1, NLRP1 and NLRP3, hence preventing excessive IL1B- and IL18-mediated inflammation. However, it can also have a positive effect in the inflammatory pathway, acting as an innate immune sensor that triggers PYCARD/ASC specks formation, caspase-1 activation, and IL1B and IL18 production. Together with AIM2, also acts as a mediator of pyroptosis, necroptosis and apoptosis (PANoptosis), an integral part of host defense against pathogens, in response to bacterial infection. It is required for PSTPIP1-induced PYCARD/ASC oligomerization and inflammasome formation. Recruits PSTPIP1 to inflammasomes, and is required for PSTPIP1 oligomerization. The sequence is that of Pyrin from Rattus norvegicus (Rat).